We begin with the raw amino-acid sequence, 945 residues long: Leucine--tRNA ligase 1 (945 aa).

Positions 42–52 match the 'HIGH' region motif; sequence PYTNSPLHIGH. Residues 625 to 629 carry the 'KMSKS' region motif; that stretch reads KMSKS. Lys-628 contributes to the ATP binding site.

It belongs to the class-I aminoacyl-tRNA synthetase family.

It localises to the cytoplasm. It carries out the reaction tRNA(Leu) + L-leucine + ATP = L-leucyl-tRNA(Leu) + AMP + diphosphate. The chain is Leucine--tRNA ligase 1 from Sulfurisphaera tokodaii (strain DSM 16993 / JCM 10545 / NBRC 100140 / 7) (Sulfolobus tokodaii).